The chain runs to 318 residues: Lipid A biosynthesis acyltransferase (318 aa).

The chain crosses the membrane as a helical span at residues 27-47; it reads PQYWGIWLGIFFLLLLAFVPF. The HXXXXD motif signature appears at 145–150; sequence HGWAID.

Belongs to the LpxL/LpxM/LpxP family. LpxM subfamily.

It is found in the cell inner membrane. The catalysed reaction is an alpha-Kdo-(2-&gt;4)-alpha-Kdo-(2-&gt;6)-(acyl)-lipid IVA + a fatty acyl-[ACP] = an alpha-Kdo-(2-&gt;4)-alpha-Kdo-(2-&gt;6)-lipid A + holo-[ACP]. It participates in glycolipid biosynthesis; KDO(2)-lipid A biosynthesis; KDO(2)-lipid A from CMP-3-deoxy-D-manno-octulosonate and lipid IV(A): step 4/4. It functions in the pathway bacterial outer membrane biogenesis; lipopolysaccharide biosynthesis. Functionally, catalyzes the transfer of an acyl chain from an acyl-[acyl-carrier-protein] (ACP) to a Kdo(2)-(acyl)-lipid IV(A) to form a Kdo(2)-lipid A. This Haemophilus influenzae (strain ATCC 51907 / DSM 11121 / KW20 / Rd) protein is Lipid A biosynthesis acyltransferase.